Reading from the N-terminus, the 249-residue chain is tRNA(Phe) (4-demethylwyosine(37)-C(7)) aminocarboxypropyltransferase (249 aa).

S-adenosyl-L-methionine contacts are provided by residues serine 80, arginine 87, glutamate 127, and 154–155 (DN).

This sequence belongs to the class I-like SAM-binding methyltransferase superfamily. TRM5/TYW2 family.

The protein resides in the cytoplasm. The catalysed reaction is 4-demethylwyosine(37) in tRNA(Phe) + S-adenosyl-L-methionine = 4-demethyl-7-[(3S)-3-amino-3-carboxypropyl]wyosine(37) in tRNA(Phe) + S-methyl-5'-thioadenosine + H(+). Its function is as follows. S-adenosyl-L-methionine-dependent transferase that acts as a component of the wyosine derivatives biosynthesis pathway. Catalyzes the transfer of the alpha-amino-alpha-carboxypropyl (acp) group from S-adenosyl-L-methionine to 4-demethylwyosine (imG-14), forming 7-aminocarboxypropyl-demethylwyosine (wybutosine-86) at position 37 of tRNA(Phe). In Methanocaldococcus jannaschii (strain ATCC 43067 / DSM 2661 / JAL-1 / JCM 10045 / NBRC 100440) (Methanococcus jannaschii), this protein is tRNA(Phe) (4-demethylwyosine(37)-C(7)) aminocarboxypropyltransferase.